Consider the following 317-residue polypeptide: Proline-rich protein 2 (317 aa).

The N-terminal stretch at 1-16 (MLVVLFTVALLALSSA) is a signal peptide. Positions 15–317 (SAQGPREELQ…PPQGRPQGPQ (303 aa)) are disordered. Residues 32–44 (QRPPPSGSQPRPP) show a composition bias toward pro residues. The N-linked (GlcNAc...) asparagine glycan is linked to N46. Pro residues-rich tracts occupy residues 51–183 (GPPP…PPAG) and 204–288 (QSPP…PTQG). Residues 289–305 (PHPTGGPQQTPPLAGNP) show a composition bias toward low complexity. The span at 306 to 317 (QGPPQGRPQGPQ) shows a compositional bias: pro residues.

The protein localises to the secreted. The polypeptide is Proline-rich protein 2 (Prp2) (Mus musculus (Mouse)).